A 214-amino-acid chain; its full sequence is Endothelin-3 (214 aa).

The first 16 residues, methionine 1 to alanine 16, serve as a signal peptide directing secretion. Positions alanine 17 to proline 94 are excised as a propeptide. The disordered stretch occupies residues glutamine 24–histidine 91. A compositionally biased stretch (polar residues) spans serine 25–glutamine 35. 2 disulfide bridges follow: cysteine 97–cysteine 111 and cysteine 99–cysteine 107. The propeptide occupies isoleucine 118–proline 214. The segment at cysteine 159–cysteine 173 is endothelin-like. The tract at residues serine 183–proline 214 is disordered. Positions arginine 185–glycine 198 are enriched in basic and acidic residues.

This sequence belongs to the endothelin/sarafotoxin family.

The protein localises to the secreted. Functionally, endothelins are endothelium-derived vasoconstrictor peptides. This chain is Endothelin-3 (Edn3), found in Mus musculus (Mouse).